A 531-amino-acid chain; its full sequence is Tyrosine/DOPA decarboxylase 2 (531 aa).

Residue lysine 319 is modified to N6-(pyridoxal phosphate)lysine.

This sequence belongs to the group II decarboxylase family. In terms of assembly, homodimer. Requires pyridoxal 5'-phosphate as cofactor. In terms of tissue distribution, predominantly expressed in the roots and stems, while a lower level expression is seen in the sepals and carpels of fully expanded flowers.

The catalysed reaction is L-tyrosine + H(+) = tyramine + CO2. It carries out the reaction L-dopa + H(+) = dopamine + CO2. The enzyme catalyses 5-hydroxy-L-tryptophan + H(+) = serotonin + CO2. Functionally, marginally higher substrate specificity for L-DOPA over L-tyrosine. The chain is Tyrosine/DOPA decarboxylase 2 (TYDC2) from Papaver somniferum (Opium poppy).